A 380-amino-acid polypeptide reads, in one-letter code: Cytochrome b (380 aa).

4 helical membrane-spanning segments follow: residues phenylalanine 34 to methionine 54, tryptophan 78 to isoleucine 99, tryptophan 114 to leucine 134, and phenylalanine 179 to threonine 199. Residues histidine 84 and histidine 98 each coordinate heme b. Histidine 183 and histidine 197 together coordinate heme b. Histidine 202 serves as a coordination point for a ubiquinone. 4 helical membrane-spanning segments follow: residues leucine 227 to serine 247, leucine 289 to histidine 309, leucine 321 to serine 341, and phenylalanine 348 to proline 368.

It belongs to the cytochrome b family. As to quaternary structure, the cytochrome bc1 complex contains 11 subunits: 3 respiratory subunits (MT-CYB, CYC1 and UQCRFS1), 2 core proteins (UQCRC1 and UQCRC2) and 6 low-molecular weight proteins (UQCRH/QCR6, UQCRB/QCR7, UQCRQ/QCR8, UQCR10/QCR9, UQCR11/QCR10 and a cleavage product of UQCRFS1). This cytochrome bc1 complex then forms a dimer. It depends on heme b as a cofactor.

The protein localises to the mitochondrion inner membrane. In terms of biological role, component of the ubiquinol-cytochrome c reductase complex (complex III or cytochrome b-c1 complex) that is part of the mitochondrial respiratory chain. The b-c1 complex mediates electron transfer from ubiquinol to cytochrome c. Contributes to the generation of a proton gradient across the mitochondrial membrane that is then used for ATP synthesis. The sequence is that of Cytochrome b (MT-CYB) from Hydrobates pelagicus (European storm-petrel).